Reading from the N-terminus, the 364-residue chain is Aminomethyltransferase (364 aa).

It belongs to the GcvT family. As to quaternary structure, the glycine cleavage system is composed of four proteins: P, T, L and H.

The catalysed reaction is N(6)-[(R)-S(8)-aminomethyldihydrolipoyl]-L-lysyl-[protein] + (6S)-5,6,7,8-tetrahydrofolate = N(6)-[(R)-dihydrolipoyl]-L-lysyl-[protein] + (6R)-5,10-methylene-5,6,7,8-tetrahydrofolate + NH4(+). Functionally, the glycine cleavage system catalyzes the degradation of glycine. The sequence is that of Aminomethyltransferase from Shewanella baltica (strain OS223).